The primary structure comprises 584 residues: MVAPIKILGDRLRRALQAALPLDTYPQPLLVPASQVKFGDYQSNVCLSLAKQLGKAPRELAQEVVPHLEVEDLCQPVEIAGPGFLNFRLKPEFLAATLQAARGSDRLGIPPAREPRRVVVDFSSPNIAKEMHVGHLRSTIIGDCIARILEFQGHTVLRLNHVGDWGTQFGMLIAYLDEVYPDALTTANALDLGDLVTFYKKAKQRFDSDPEFQQKARAKVVALQQGEEQSRRAWQLLCEQSRREFQKIYDLLDIQLTERGESFYNPFLPAVIEDLAACGLLVEDQGAKVVFLEGFTNKEGQPQPLIIQKSDGGYNYATTDLAALRYRIDKDQADWIIYVTDVGQSTHFAQVFQVAQRAGWVPPHVTLTHVPFGLVLGEDGKRLKTRSGETIRLIDLLTEAIARSRADLEQRLATEGRTESPEFIDTVARAIGIGAVKYADLSQNRNSNYVFSYDKMLSLQGNTAPYLLYAYVRVQGLTRRGDIDWCTLSPDSPLLLEDETEQHLAKHLVQLEETLDLVSTELLPNRLCQYLFELSQLFNQFYDRCPILSAPQPTKQSRLTLAYLTAQTLKLGLSLLGIPVLDRI.

The 'HIGH' region motif lies at 125–135 (PNIAKEMHVGH).

The protein belongs to the class-I aminoacyl-tRNA synthetase family. Monomer.

It is found in the cytoplasm. It carries out the reaction tRNA(Arg) + L-arginine + ATP = L-arginyl-tRNA(Arg) + AMP + diphosphate. This chain is Arginine--tRNA ligase, found in Thermosynechococcus vestitus (strain NIES-2133 / IAM M-273 / BP-1).